A 399-amino-acid chain; its full sequence is Tyrosine--tRNA ligase (399 aa).

Residue Tyr36 coordinates L-tyrosine. The 'HIGH' region motif lies at 41 to 50 (PTAPSLHIGN). 2 residues coordinate L-tyrosine: Tyr166 and Gln170. The 'KMSKS' region signature appears at 226-230 (KMGKS). Lys229 contacts ATP. The region spanning 332–395 (TRLVDVIVDL…KKRFVTVQVI (64 aa)) is the S4 RNA-binding domain.

The protein belongs to the class-I aminoacyl-tRNA synthetase family. TyrS type 1 subfamily. Homodimer.

It is found in the cytoplasm. It carries out the reaction tRNA(Tyr) + L-tyrosine + ATP = L-tyrosyl-tRNA(Tyr) + AMP + diphosphate + H(+). In terms of biological role, catalyzes the attachment of tyrosine to tRNA(Tyr) in a two-step reaction: tyrosine is first activated by ATP to form Tyr-AMP and then transferred to the acceptor end of tRNA(Tyr). The sequence is that of Tyrosine--tRNA ligase from Mycoplasma pneumoniae (strain ATCC 29342 / M129 / Subtype 1) (Mycoplasmoides pneumoniae).